The chain runs to 147 residues: MVHLSADEKSAINAVWSKVNIENDGHDALTRLLVVFPWTQRYFSSFGNLSNVAAISGNAKVRAHGKKVLSAVDESIHHLDDIKNFLSVLSTKHAEELHVDPENFKRLADVLVIVLAGKLGAAFTPQVQAAWEKFSAGLVAALSHGYF.

The Globin domain maps to 3–147 (HLSADEKSAI…LVAALSHGYF (145 aa)). Heme b-binding residues include His-64 and His-93.

The protein belongs to the globin family. Heterotetramer of two alpha chains and two beta chains. Red blood cells.

This is a larval (tadpole) beta-globin. The sequence is that of Hemoglobin larval subunit beta-1 from Xenopus laevis (African clawed frog).